A 423-amino-acid chain; its full sequence is Polyglutamylase complex subunit TTLL1 (423 aa).

The TTL domain maps to 1 to 367 (MAGRVKWVTD…NGEIPDCKWN (367 aa)). ATP is bound by residues lysine 138, 144 to 145 (QG), 181 to 184 (SVYI), and 194 to 196 (KFD). Glutamine 144 contributes to the a protein binding site. L-glutamate is bound at residue arginine 220. 241–242 (TN) serves as a coordination point for ATP. An L-glutamate-binding site is contributed by lysine 259. Residues aspartate 313, glutamate 326, and asparagine 328 each contribute to the Mg(2+) site. Lysine 344 contacts L-glutamate. The segment at 390 to 423 (DGAERELRNRPGQPVGPRAGRSRDSGRSVLTTWK) is disordered.

The protein belongs to the tubulin polyglutamylase family. As to quaternary structure, part of the neuronal tubulin polyglutamylase complex which contains TPGS1, TPGS2, TTLL1, LRRC49 and NICN1. Interacts with PCM1, CSTPP1 and LRRC49. Requires Mg(2+) as cofactor. Highly expressed in brain, heart and kidney. Expressed in liver, lung, muscle, spleen, testis and trachea. In the brain, expressed in ependymal cilia, cortex, corpus callosum and striatum. Expressed in blastomere.

It is found in the cytoplasm. The protein resides in the cytoskeleton. Its subcellular location is the cilium basal body. It localises to the cilium axoneme. The protein localises to the cell projection. It is found in the cilium. The protein resides in the flagellum. It carries out the reaction (L-glutamyl)(n)-gamma-L-glutamyl-L-glutamyl-[protein] + L-glutamate + ATP = (L-glutamyl)(n+1)-gamma-L-glutamyl-L-glutamyl-[protein] + ADP + phosphate + H(+). Its function is as follows. Catalytic subunit of a polyglutamylase complex which modifies tubulin, generating side chains of glutamate on the gamma-carboxyl group of specific glutamate residues within the C-terminal tail of tubulin. Probably involved in the side-chain elongation step of the polyglutamylation reaction rather than the initiation step. Modifies both alpha- and beta-tubulins with a preference for the alpha-tail. Unlike most polyglutamylases of the tubulin--tyrosine ligase family, only displays a catalytic activity when in complex with other proteins as it is most likely lacking domains important for autonomous activity. Part of the neuronal tubulin polyglutamylase complex. Mediates cilia and flagella polyglutamylation which is essential for their biogenesis and motility. Involved in respiratory motile cilia function through the regulation of beating asymmetry. Essential for sperm flagella biogenesis, motility and male fertility. Also mediates glutamylation of non-tubulin proteins. Involved in KLF4 glutamylation which impedes its ubiquitination, thereby leading to somatic cell reprogramming, pluripotency maintenance and embryogenesis. This is Polyglutamylase complex subunit TTLL1 from Mus musculus (Mouse).